A 331-amino-acid chain; its full sequence is Aspartate carbamoyltransferase catalytic subunit (331 aa).

Carbamoyl phosphate is bound by residues Arg76 and Thr77. Lys104 serves as a coordination point for L-aspartate. The carbamoyl phosphate site is built by Arg126, His154, and Gln157. Positions 187 and 246 each coordinate L-aspartate. 2 residues coordinate carbamoyl phosphate: Gly287 and Pro288.

This sequence belongs to the aspartate/ornithine carbamoyltransferase superfamily. ATCase family. In terms of assembly, heterododecamer (2C3:3R2) of six catalytic PyrB chains organized as two trimers (C3), and six regulatory PyrI chains organized as three dimers (R2).

It catalyses the reaction carbamoyl phosphate + L-aspartate = N-carbamoyl-L-aspartate + phosphate + H(+). It functions in the pathway pyrimidine metabolism; UMP biosynthesis via de novo pathway; (S)-dihydroorotate from bicarbonate: step 2/3. Its function is as follows. Catalyzes the condensation of carbamoyl phosphate and aspartate to form carbamoyl aspartate and inorganic phosphate, the committed step in the de novo pyrimidine nucleotide biosynthesis pathway. The chain is Aspartate carbamoyltransferase catalytic subunit from Dehalococcoides mccartyi (strain CBDB1).